The primary structure comprises 223 residues: MAIIIPESSYERRVKALYEKQIRMEALEGKFIKKVYKFNSNLLDVKEAVLRHQRKVGKLQKVVMERREELEKRVSFMEELAQELEATKLRNLAMKEQIKQRKMIARQRKNEIMERIQTLSKTTGTYVNQEALPARVKGVTVLRGDKRDQLIPFDLNATDAEGLNSLCQHLESLNVDVSQWQQLVSLAMDVAMEARAPTTPPKEVANCKSIIEIDLTSPTSHQA.

Positions 51 to 119 (RHQRKVGKLQ…NEIMERIQTL (69 aa)) form a coiled coil.

Belongs to the SPC25 family. In terms of assembly, component of the Ndc80 complex, which is composed of Ndc80, Nuf2 and Spc25.

Its subcellular location is the nucleus. The protein localises to the chromosome. It is found in the centromere. It localises to the kinetochore. In terms of biological role, acts as a component of the essential kinetochore-associated Ndc80 complex, which is required for chromosome segregation and spindle checkpoint activity during meiosis and mitosis. Required for kinetochore integrity and the organization of stable microtubule binding sites in the outer plate of the kinetochore. Participates in SAC signaling that responds specifically to disruptions in spindle microtubule dynamics. The NDC80 complex synergistically enhances the affinity of the SKA1 complex for microtubules and may allow the NDC80 complex to track depolymerizing microtubules. This Drosophila teissieri (Fruit fly) protein is Kinetochore protein Spc25.